Here is a 633-residue protein sequence, read N- to C-terminus: Chaperone protein HtpG (633 aa).

The tract at residues 1 to 344 is a; substrate-binding; it reads MSLQPQAETL…SNDLPLNISR (344 aa). Residues 345–560 are b; the sequence is ELLQSNEVIN…ENEMSGHLQR (216 aa). The tract at residues 561–633 is c; the sequence is LLIQTGQDFM…KGLNELLLDS (73 aa).

Belongs to the heat shock protein 90 family. In terms of assembly, homodimer.

It localises to the cytoplasm. In terms of biological role, molecular chaperone. Has ATPase activity. This is Chaperone protein HtpG from Coxiella burnetii (strain RSA 493 / Nine Mile phase I).